An 88-amino-acid chain; its full sequence is MEEFIIKIAGTKGISNFKSYHFSIISNYENFFNFILPKDVKDVLVVLPFDEEKTKTIKHAITNARSNVSVTIMYSGKIRDEMIIGWRT.

This is an uncharacterized protein from Sulfolobus islandicus filamentous virus (isolate Iceland/Hveragerdi) (SIFV).